The primary structure comprises 1013 residues: Probable ubiquitination network signaling protein acrB (1013 aa).

Disordered stretches follow at residues 1–65 (MPRS…NSDT) and 104–139 (GQANGAVPQNGCLPGDAARRTEKPATASKRSGSSAS). Over residues 33 to 64 (NGHLNGNHANSSTPTSGPSSQVDWPSSRSNSD) the composition is skewed to polar residues. 3 helical membrane passes run 159 to 179 (IAILIFLLQLPPMVLTLVQFL), 212 to 232 (LGTMIAMDGFCLLFWGLFMWT), and 255 to 275 (SGKNGGVNALCVGIVLVLHLI). Disordered stretches follow at residues 342–367 (SMAKNRAPAPPRTGKRIDTEASAGSQ), 574–599 (SDAEQVSSISAPPQPTYRPSSPTTTL), 878–906 (QHASSLVGATSSHPASPTQTPSYLQHFPT), and 954–1013 (LSEA…GKGI). Residues 597–806 (TTLKNSIINA…QEYQLRTNQL (210 aa)) are a coiled coil. Residues 993–1002 (SGSGGSGSGS) show a composition bias toward gly residues. Residues 1003–1013 (GSPSSAAGKGI) show a composition bias toward low complexity.

Belongs to the acrB family.

Its subcellular location is the membrane. Its function is as follows. Component of the regulatory network controlling carbon source utilization through ubiquitination and deubiquitination involving creA, creB, creC, creD and acrB. Involved in resistance to acriflavine, and required for normal growth on a range of sole carbon sources, including fructose, cellobiose, raffinose, and starch, and reduced utilization of amino acids, including GABA and beta-alanine, as sole carbon and nitrogen sources. The protein is Probable ubiquitination network signaling protein acrB (acrB) of Aspergillus terreus (strain NIH 2624 / FGSC A1156).